The chain runs to 106 residues: Large ribosomal subunit protein eL42A (106 aa).

Position 40 is an N6-methyllysine; by RKM3 (Lys40). N6-methyllysine; by RKM4 is present on Lys55.

Belongs to the eukaryotic ribosomal protein eL42 family. Component of the large ribosomal subunit (LSU). Mature yeast ribosomes consist of a small (40S) and a large (60S) subunit. The 40S small subunit contains 1 molecule of ribosomal RNA (18S rRNA) and 33 different proteins (encoded by 57 genes). The large 60S subunit contains 3 rRNA molecules (25S, 5.8S and 5S rRNA) and 46 different proteins (encoded by 81 genes). Post-translationally, in wild-type cells, 78% of L42 is monomethylated at both Lys-40 and Lys-55, and 22% are a mixture of species with either residue monomethylated.

The protein localises to the cytoplasm. Functionally, component of the ribosome, a large ribonucleoprotein complex responsible for the synthesis of proteins in the cell. The small ribosomal subunit (SSU) binds messenger RNAs (mRNAs) and translates the encoded message by selecting cognate aminoacyl-transfer RNA (tRNA) molecules. The large subunit (LSU) contains the ribosomal catalytic site termed the peptidyl transferase center (PTC), which catalyzes the formation of peptide bonds, thereby polymerizing the amino acids delivered by tRNAs into a polypeptide chain. The nascent polypeptides leave the ribosome through a tunnel in the LSU and interact with protein factors that function in enzymatic processing, targeting, and the membrane insertion of nascent chains at the exit of the ribosomal tunnel. The chain is Large ribosomal subunit protein eL42A from Saccharomyces cerevisiae (strain ATCC 204508 / S288c) (Baker's yeast).